The primary structure comprises 599 residues: Elongation factor 4 (599 aa).

The region spanning 5-187 (NRIRNFSIVA…AIVTRLPAPK (183 aa)) is the tr-type G domain. GTP contacts are provided by residues 17–22 (DHGKST) and 134–137 (NKVD).

It belongs to the TRAFAC class translation factor GTPase superfamily. Classic translation factor GTPase family. LepA subfamily.

The protein resides in the cell inner membrane. It catalyses the reaction GTP + H2O = GDP + phosphate + H(+). Functionally, required for accurate and efficient protein synthesis under certain stress conditions. May act as a fidelity factor of the translation reaction, by catalyzing a one-codon backward translocation of tRNAs on improperly translocated ribosomes. Back-translocation proceeds from a post-translocation (POST) complex to a pre-translocation (PRE) complex, thus giving elongation factor G a second chance to translocate the tRNAs correctly. Binds to ribosomes in a GTP-dependent manner. The chain is Elongation factor 4 from Jannaschia sp. (strain CCS1).